Here is a 689-residue protein sequence, read N- to C-terminus: Protein asunder (689 aa).

The stretch at 521–550 forms a coiled coil; that stretch reads NGARLKLSKAKDQYRLLYRELEQLIQLNAT. The disordered stretch occupies residues 578–619; that stretch reads GASLLRSYTESPLSPERLEPITSGSASGSSNSNSLLKASKRR. A compositionally biased stretch (low complexity) spans 600 to 614; sequence SGSASGSSNSNSLLK. Positions 613–619 match the Nuclear localization signal (NLS) motif; sequence LKASKRR.

The protein belongs to the Integrator subunit 13 family. Belongs to the multiprotein complex Integrator, at least composed of IntS1, IntS2, IntS3, IntS4, omd/IntS5, IntS6, defl/IntS7, IntS8, IntS9, IntS10, IntS11, IntS12, asun/IntS13, IntS14 and IntS15. The core complex associates with protein phosphatase 2A subunits mts/PP2A and Pp2A-29B, to form the Integrator-PP2A (INTAC) complex. Post-translationally, phosphorylated.

It localises to the nucleus. It is found in the cytoplasm. The protein localises to the perinuclear region. Component of the integrator complex, a multiprotein complex that terminates RNA polymerase II (Pol II) transcription in the promoter-proximal region of genes. The integrator complex provides a quality checkpoint during transcription elongation by driving premature transcription termination of transcripts that are unfavorably configured for transcriptional elongation: the complex terminates transcription by (1) catalyzing dephosphorylation of the C-terminal domain (CTD) of Pol II subunit Polr2A/Rbp1 and Spt5, and (2) degrading the exiting nascent RNA transcript via endonuclease activity. The integrator complex is also involved in the 3'-end processing of the U7 snRNA, and also the spliceosomal snRNAs U1, U2, U4 and U5. This chain is Protein asunder (asun), found in Drosophila erecta (Fruit fly).